A 461-amino-acid polypeptide reads, in one-letter code: Cysteine--tRNA ligase (461 aa).

Residue cysteine 28 coordinates Zn(2+). Positions isoleucine 30–histidine 40 match the 'HIGH' region motif. 3 residues coordinate Zn(2+): cysteine 209, histidine 234, and glutamate 238. The short motif at lysine 266–serine 270 is the 'KMSKS' region element. Lysine 269 lines the ATP pocket.

This sequence belongs to the class-I aminoacyl-tRNA synthetase family. As to quaternary structure, monomer. Zn(2+) is required as a cofactor.

The protein localises to the cytoplasm. The catalysed reaction is tRNA(Cys) + L-cysteine + ATP = L-cysteinyl-tRNA(Cys) + AMP + diphosphate. The sequence is that of Cysteine--tRNA ligase from Salmonella agona (strain SL483).